A 360-amino-acid polypeptide reads, in one-letter code: Proline-rich protein 11 (360 aa).

Disordered regions lie at residues 20–43 and 174–201; these read KKKEASHFQSKLITPPPPPPSPER and PPTLPQPASHFPPPPPPPPLPPPPPPLA. Threonine 33 bears the Phosphothreonine mark. Serine 40 carries the post-translational modification Phosphoserine. Positions 175-201 are enriched in pro residues; it reads PTLPQPASHFPPPPPPPPLPPPPPPLA. The Phosphodegron motif lies at 285–291; it reads LITPGKS. Phosphothreonine is present on threonine 287. Serine 291 is subject to Phosphoserine. The D-box motif lies at 296-304; that stretch reads RKLLRKVDV. The short motif at 316–318 is the KEN box element; it reads KEN. Residues 325–330 carry the Phosphodegron motif; sequence LTPVMT. Residues 340–360 are disordered; sequence AHPRSPTPTLPLSTSSFDEQN. Serine 344 carries the post-translational modification Phosphoserine. Phosphothreonine occurs at positions 346 and 348. Residues 349 to 360 show a composition bias toward low complexity; that stretch reads LPLSTSSFDEQN.

In terms of processing, ubiquitinated. Rapidly degraded by the proteasome; degradation may involve FBXW7-specific phosphorylated phosphodegron motifs. As to expression, ubiquitously expressed.

It localises to the cytoplasm. The protein localises to the nucleus. Functionally, plays a critical role in cell cycle progression. This Homo sapiens (Human) protein is Proline-rich protein 11 (PRR11).